Consider the following 255-residue polypeptide: Ribonuclease HII (255 aa).

An RNase H type-2 domain is found at 72-255 (NYIAGVDEAG…RLSFVKNFVE (184 aa)). Residues Asp78, Glu79, and Asp170 each contribute to the a divalent metal cation site.

The protein belongs to the RNase HII family. It depends on Mn(2+) as a cofactor. The cofactor is Mg(2+).

It localises to the cytoplasm. The enzyme catalyses Endonucleolytic cleavage to 5'-phosphomonoester.. Endonuclease that specifically degrades the RNA of RNA-DNA hybrids. This chain is Ribonuclease HII, found in Ruminiclostridium cellulolyticum (strain ATCC 35319 / DSM 5812 / JCM 6584 / H10) (Clostridium cellulolyticum).